The primary structure comprises 272 residues: uncharacterized protein (272 aa).

Residues aspartate 71 and glutamate 163 contribute to the active site.

The protein belongs to the glycosyl hydrolase 25 family.

This is an uncharacterized protein from Escherichia coli (strain K12).